Here is a 144-residue protein sequence, read N- to C-terminus: Transcriptional regulator MraZ (144 aa).

2 consecutive SpoVT-AbrB domains span residues 4 to 47 (EYKN…TADK) and 77 to 120 (AQEI…DLKQ).

Belongs to the MraZ family. In terms of assembly, forms oligomers.

It localises to the cytoplasm. It is found in the nucleoid. The sequence is that of Transcriptional regulator MraZ from Treponema denticola (strain ATCC 35405 / DSM 14222 / CIP 103919 / JCM 8153 / KCTC 15104).